The following is a 95-amino-acid chain: Aspartyl/glutamyl-tRNA(Asn/Gln) amidotransferase subunit C (95 aa).

It belongs to the GatC family. Heterotrimer of A, B and C subunits.

The enzyme catalyses L-glutamyl-tRNA(Gln) + L-glutamine + ATP + H2O = L-glutaminyl-tRNA(Gln) + L-glutamate + ADP + phosphate + H(+). It catalyses the reaction L-aspartyl-tRNA(Asn) + L-glutamine + ATP + H2O = L-asparaginyl-tRNA(Asn) + L-glutamate + ADP + phosphate + 2 H(+). Allows the formation of correctly charged Asn-tRNA(Asn) or Gln-tRNA(Gln) through the transamidation of misacylated Asp-tRNA(Asn) or Glu-tRNA(Gln) in organisms which lack either or both of asparaginyl-tRNA or glutaminyl-tRNA synthetases. The reaction takes place in the presence of glutamine and ATP through an activated phospho-Asp-tRNA(Asn) or phospho-Glu-tRNA(Gln). The polypeptide is Aspartyl/glutamyl-tRNA(Asn/Gln) amidotransferase subunit C (Sinorhizobium fredii (strain NBRC 101917 / NGR234)).